Consider the following 336-residue polypeptide: Sodium/bile acid cotransporter 7 (336 aa).

The Cytoplasmic portion of the chain corresponds to M1–E10. A helical transmembrane segment spans residues W11–V31. Over K32–H37 the chain is Extracellular. Residues P38–L58 traverse the membrane as a helical segment. The Cytoplasmic segment spans residues K59–K71. The helical transmembrane segment at L72–L92 threads the bilayer. The Extracellular segment spans residues K93–P116. The chain crosses the membrane as a helical span at residues P117–F137. Residue N138 is a topological domain, cytoplasmic. The chain crosses the membrane as a helical span at residues S139–G159. The Extracellular segment spans residues S160–S163. The helical transmembrane segment at V164–G184 threads the bilayer. The Cytoplasmic portion of the chain corresponds to Q185–P201. The chain crosses the membrane as a helical span at residues F202–F222. The Extracellular segment spans residues N223–S233. A helical membrane pass occupies residues L234–F254. The Cytoplasmic portion of the chain corresponds to L255–A270. Residues I271–F291 traverse the membrane as a helical segment. Topologically, residues E292–S298 are extracellular. A helical membrane pass occupies residues L299 to L319. The Cytoplasmic portion of the chain corresponds to P320–I336.

It belongs to the bile acid:sodium symporter (BASS) (TC 2.A.28) family.

It localises to the cell membrane. Its subcellular location is the endoplasmic reticulum membrane. It is found in the golgi apparatus membrane. In terms of biological role, involved in teeth and skeletal development. Has an essential role in the biosynthesis and trafficking of glycosaminoglycans and glycoproteins to produce a proper functioning extracellular matrix. Required for extracellular matrix mineralization. Also involved in the regulation of cellular calcium homeostasis. Does not show transport activity towards bile acids or steroid sulfates. The protein is Sodium/bile acid cotransporter 7 (slc10a7) of Danio rerio (Zebrafish).